The primary structure comprises 444 residues: Methylenetetrahydrofolate--tRNA-(uracil-5-)-methyltransferase TrmFO (444 aa).

9–14 (GAGLAG) contributes to the FAD binding site.

It belongs to the MnmG family. TrmFO subfamily. The cofactor is FAD.

The protein resides in the cytoplasm. It carries out the reaction uridine(54) in tRNA + (6R)-5,10-methylene-5,6,7,8-tetrahydrofolate + NADH + H(+) = 5-methyluridine(54) in tRNA + (6S)-5,6,7,8-tetrahydrofolate + NAD(+). The enzyme catalyses uridine(54) in tRNA + (6R)-5,10-methylene-5,6,7,8-tetrahydrofolate + NADPH + H(+) = 5-methyluridine(54) in tRNA + (6S)-5,6,7,8-tetrahydrofolate + NADP(+). Catalyzes the folate-dependent formation of 5-methyl-uridine at position 54 (M-5-U54) in all tRNAs. The sequence is that of Methylenetetrahydrofolate--tRNA-(uracil-5-)-methyltransferase TrmFO from Koribacter versatilis (strain Ellin345).